The chain runs to 152 residues: UPF0178 protein YaiI (152 aa).

It belongs to the UPF0178 family.

The sequence is that of UPF0178 protein YaiI from Escherichia coli O81 (strain ED1a).